Reading from the N-terminus, the 161-residue chain is Photosystem I reaction center subunit XI (161 aa).

2 helical membrane-spanning segments follow: residues leucine 84–valine 104 and phenylalanine 126–glutamate 146.

Belongs to the PsaL family.

The protein resides in the cellular thylakoid membrane. The chain is Photosystem I reaction center subunit XI from Trichodesmium erythraeum (strain IMS101).